A 495-amino-acid chain; its full sequence is Glycerol kinase (495 aa).

Residue Thr-14 participates in ADP binding. Residues Thr-14, Thr-15, and Ser-16 each contribute to the ATP site. Thr-14 contacts sn-glycerol 3-phosphate. Residue Arg-18 coordinates ADP. Sn-glycerol 3-phosphate is bound by residues Arg-84, Glu-85, Tyr-136, and Asp-246. Glycerol is bound by residues Arg-84, Glu-85, Tyr-136, Asp-246, and Gln-247. Residues Thr-268 and Gly-312 each contribute to the ADP site. 4 residues coordinate ATP: Thr-268, Gly-312, Gln-316, and Gly-413. Residues Gly-413 and Asn-417 each coordinate ADP.

It belongs to the FGGY kinase family.

The enzyme catalyses glycerol + ATP = sn-glycerol 3-phosphate + ADP + H(+). Its pathway is polyol metabolism; glycerol degradation via glycerol kinase pathway; sn-glycerol 3-phosphate from glycerol: step 1/1. Its activity is regulated as follows. Inhibited by fructose 1,6-bisphosphate (FBP). Key enzyme in the regulation of glycerol uptake and metabolism. Catalyzes the phosphorylation of glycerol to yield sn-glycerol 3-phosphate. This chain is Glycerol kinase, found in Bdellovibrio bacteriovorus (strain ATCC 15356 / DSM 50701 / NCIMB 9529 / HD100).